The primary structure comprises 83 residues: U4-theraphotoxin-Hhn1x (83 aa).

The N-terminal stretch at 1–20 is a signal peptide; it reads MTLIAILTCAAALVLHTTAA. A propeptide spanning residues 21–46 is cleaved from the precursor; the sequence is EELEAESQLMEVGMPDTELEAVDEER. Cystine bridges form between C50-C64, C54-C75, and C69-C80.

It belongs to the neurotoxin 12 (Hwtx-2) family. 02 (Hwtx-2) subfamily. Expressed by the venom gland.

The protein localises to the secreted. Postsynaptic neurotoxin. This Cyriopagopus hainanus (Chinese bird spider) protein is U4-theraphotoxin-Hhn1x.